Consider the following 225-residue polypeptide: Holliday junction branch migration complex subunit RuvA (225 aa).

The tract at residues Met-1–Ser-71 is domain I. The domain II stretch occupies residues Ser-72–Ser-150. The interval Lys-151–Ile-161 is flexible linker. The segment at Ile-161 to Arg-225 is domain III.

Belongs to the RuvA family. In terms of assembly, homotetramer. Forms an RuvA(8)-RuvB(12)-Holliday junction (HJ) complex. HJ DNA is sandwiched between 2 RuvA tetramers; dsDNA enters through RuvA and exits via RuvB. An RuvB hexamer assembles on each DNA strand where it exits the tetramer. Each RuvB hexamer is contacted by two RuvA subunits (via domain III) on 2 adjacent RuvB subunits; this complex drives branch migration. In the full resolvosome a probable DNA-RuvA(4)-RuvB(12)-RuvC(2) complex forms which resolves the HJ.

It localises to the cytoplasm. Its function is as follows. The RuvA-RuvB-RuvC complex processes Holliday junction (HJ) DNA during genetic recombination and DNA repair, while the RuvA-RuvB complex plays an important role in the rescue of blocked DNA replication forks via replication fork reversal (RFR). RuvA specifically binds to HJ cruciform DNA, conferring on it an open structure. The RuvB hexamer acts as an ATP-dependent pump, pulling dsDNA into and through the RuvAB complex. HJ branch migration allows RuvC to scan DNA until it finds its consensus sequence, where it cleaves and resolves the cruciform DNA. This is Holliday junction branch migration complex subunit RuvA from Prochlorococcus marinus (strain MIT 9312).